A 322-amino-acid polypeptide reads, in one-letter code: Manganese-dependent ADP-ribose/CDP-alcohol diphosphatase (322 aa).

The Zn(2+) site is built by Asp-13, Gln-15, Asp-60, Asn-96, His-228, His-265, and His-267.

This sequence belongs to the ADPRibase-Mn family. In terms of assembly, monomer. Mg(2+) serves as cofactor.

The enzyme catalyses CDP-choline + H2O = phosphocholine + CMP + 2 H(+). It catalyses the reaction ADP-D-ribose + H2O = D-ribose 5-phosphate + AMP + 2 H(+). It carries out the reaction CDP-glycerol + H2O = sn-glycerol 3-phosphate + CMP + 2 H(+). In terms of biological role, hydrolyzes ADP-ribose, IDP-ribose, CDP-glycerol, CDP-choline and CDP-ethanolamine, but not other non-reducing ADP-sugars or CDP-glucose. The chain is Manganese-dependent ADP-ribose/CDP-alcohol diphosphatase (adprm) from Danio rerio (Zebrafish).